A 494-amino-acid chain; its full sequence is Probable cytosol aminopeptidase (494 aa).

Lys260 and Asp265 together coordinate Mn(2+). Lys272 is an active-site residue. Positions 283, 342, and 344 each coordinate Mn(2+). The active site involves Arg346.

The protein belongs to the peptidase M17 family. Mn(2+) serves as cofactor.

The protein localises to the cytoplasm. The catalysed reaction is Release of an N-terminal amino acid, Xaa-|-Yaa-, in which Xaa is preferably Leu, but may be other amino acids including Pro although not Arg or Lys, and Yaa may be Pro. Amino acid amides and methyl esters are also readily hydrolyzed, but rates on arylamides are exceedingly low.. The enzyme catalyses Release of an N-terminal amino acid, preferentially leucine, but not glutamic or aspartic acids.. In terms of biological role, presumably involved in the processing and regular turnover of intracellular proteins. Catalyzes the removal of unsubstituted N-terminal amino acids from various peptides. This Bacillus mycoides (strain KBAB4) (Bacillus weihenstephanensis) protein is Probable cytosol aminopeptidase.